We begin with the raw amino-acid sequence, 212 residues long: Large ribosomal subunit protein uL3 (212 aa).

N5-methylglutamine is present on Q153.

Belongs to the universal ribosomal protein uL3 family. Part of the 50S ribosomal subunit. Forms a cluster with proteins L14 and L19. In terms of processing, methylated by PrmB.

One of the primary rRNA binding proteins, it binds directly near the 3'-end of the 23S rRNA, where it nucleates assembly of the 50S subunit. This chain is Large ribosomal subunit protein uL3, found in Colwellia psychrerythraea (strain 34H / ATCC BAA-681) (Vibrio psychroerythus).